Reading from the N-terminus, the 591-residue chain is L-fucose isomerase (591 aa).

Residues Glu337 and Asp361 each act as proton acceptor in the active site. Mn(2+)-binding residues include Glu337, Asp361, and His528.

The protein belongs to the L-fucose isomerase family. As to quaternary structure, homohexamer. Mn(2+) serves as cofactor.

Its subcellular location is the cytoplasm. It carries out the reaction L-fucose = L-fuculose. Its pathway is carbohydrate degradation; L-fucose degradation; L-lactaldehyde and glycerone phosphate from L-fucose: step 1/3. Converts the aldose L-fucose into the corresponding ketose L-fuculose. The chain is L-fucose isomerase from Escherichia coli (strain ATCC 8739 / DSM 1576 / NBRC 3972 / NCIMB 8545 / WDCM 00012 / Crooks).